The primary structure comprises 115 residues: Putative membrane protein insertion efficiency factor (115 aa).

The protein belongs to the UPF0161 family.

It is found in the cell membrane. Its function is as follows. Could be involved in insertion of integral membrane proteins into the membrane. This is Putative membrane protein insertion efficiency factor from Mycobacterium avium (strain 104).